Reading from the N-terminus, the 451-residue chain is MLSCIFQDTIFLSSFLAVSLICMTTALWGTILLVERQPLLSESLSHACYPGLLIGALLSYKVPAFSDSLWVIIFFGCLASVLGCLGISFLEKKLAMHKDSALCLVLVSFFGVGVILVSYVKDCCPLLYNKINAYLYGQAATLGYTEAKLALIIFCLSAVVLWWWYRQISVAIFDREFAYSCGLRTRTAELVVLVFISLVIVSGVRSVGILLISAMFVAPPLSARQLSDRLSTILILSSIFGGICGALGCYFSVAFTCQTVVEGKPISIILPTGPLVVFFAGVLVFLCLIFSWKTGWITRYFRRKWFLFSRDEEHLLKIFWYLREQNTYQVGMRDFVRSRKYQEYFGDKVFPRFRMFLLCKKGLVSCSEHQWSLTDKGLARAAKLVRAHRLWESYLVSQLDFNKNEVHHFAEEMEHVLTDELDSTLSQMLQDPDYDPHQREIPKRTRKSDGC.

Helical transmembrane passes span 14-34, 38-58, 70-90, 100-120, 145-165, 192-212, 233-253, and 269-289; these read SFLAVSLICMTTALWGTILLV, PLLSESLSHACYPGLLIGALL, WVIIFFGCLASVLGCLGISFL, SALCLVLVSFFGVGVILVSYV, TEAKLALIIFCLSAVVLWWWY, VLVFISLVIVSGVRSVGILLI, ILILSSIFGGICGALGCYFSV, and ILPTGPLVVFFAGVLVFLCLI. Residues 432 to 451 are disordered; it reads PDYDPHQREIPKRTRKSDGC. Positions 434–451 are enriched in basic and acidic residues; that stretch reads YDPHQREIPKRTRKSDGC.

It belongs to the ABC-3 integral membrane protein family.

It localises to the cell inner membrane. Its function is as follows. Part of an ATP-driven transport system CT_067/CT_068/CT_069/CT_070 for a metal. This Chlamydia trachomatis serovar D (strain ATCC VR-885 / DSM 19411 / UW-3/Cx) protein is Probable metal transport system membrane protein CT_069.